The sequence spans 596 residues: Protein Malvolio (596 aa).

Residues 1-34 (MSSNEAYHEPGAGGDGPGGSSGASGGGSQRSNQL) form a disordered region. Positions 11 to 28 (GAGGDGPGGSSGASGGGS) are enriched in gly residues. Asn41 carries N-linked (GlcNAc...) asparagine glycosylation. 7 consecutive transmembrane segments (helical) span residues 77–97 (LWAF…PGNI), 105–125 (AAAK…GLLM), 154–174 (WILW…EVIG), 186–206 (VVPL…FLFL), 216–236 (FLFG…YIVS), 263–283 (AVGV…SALV), and 309–329 (VALF…AHGM). An N-linked (GlcNAc...) asparagine glycan is attached at Asn359. 5 consecutive transmembrane segments (helical) span residues 373-393 (LFLG…GILA), 424-444 (VLVT…FSKM), 463-483 (PFAA…GEFV), 490-510 (IVSI…VVVQ), and 520-540 (LLAL…YLVI). A glycan (N-linked (GlcNAc...) asparagine) is linked at Asn574.

The protein belongs to the NRAMP family. Expressed in macrophages and in the nervous system.

It localises to the membrane. Functionally, putative transporter required for normal taste behavior. May be a nitrite/nitrate transporter. This Drosophila melanogaster (Fruit fly) protein is Protein Malvolio (Mvl).